An 817-amino-acid chain; its full sequence is Transcription factor SPT20 homolog-like 2 (817 aa).

Residues 1–14 (MDRDLEQALDRTEN) are compositionally biased toward basic and acidic residues. 5 disordered regions span residues 1-28 (MDRD…RRRY), 249-275 (PQQE…ERKV), 369-553 (PRKK…AAGR), 598-630 (PGSG…AVQA), and 675-697 (QLQQ…LGLS). Positions 423-440 (SHSSSGPASVSQLSSWKT) are enriched in polar residues. Low complexity-rich tracts occupy residues 469-479 (SSSGKISSGNS), 494-505 (PAAAPAVAAAAP), 513-531 (AAPA…GAAP), and 598-618 (PGSG…SSGG).

The protein belongs to the SPT20 family.

The sequence is that of Transcription factor SPT20 homolog-like 2 (SUPT20HL2) from Homo sapiens (Human).